Here is a 715-residue protein sequence, read N- to C-terminus: Polyphosphate kinase (715 aa).

ATP is bound at residue Asn-60. Mg(2+)-binding residues include Arg-380 and Arg-410. Catalysis depends on His-440, which acts as the Phosphohistidine intermediate. The ATP site is built by Tyr-473, Arg-569, and His-597.

Belongs to the polyphosphate kinase 1 (PPK1) family. Requires Mg(2+) as cofactor. In terms of processing, an intermediate of this reaction is the autophosphorylated ppk in which a phosphate is covalently linked to a histidine residue through a N-P bond.

It catalyses the reaction [phosphate](n) + ATP = [phosphate](n+1) + ADP. Catalyzes the reversible transfer of the terminal phosphate of ATP to form a long-chain polyphosphate (polyP). This is Polyphosphate kinase from Erythrobacter litoralis (strain HTCC2594).